The chain runs to 141 residues: ATP synthase epsilon chain (141 aa).

Belongs to the ATPase epsilon chain family. In terms of assembly, F-type ATPases have 2 components, CF(1) - the catalytic core - and CF(0) - the membrane proton channel. CF(1) has five subunits: alpha(3), beta(3), gamma(1), delta(1), epsilon(1). CF(0) has three main subunits: a, b and c.

The protein resides in the cell inner membrane. Functionally, produces ATP from ADP in the presence of a proton gradient across the membrane. The sequence is that of ATP synthase epsilon chain from Halorhodospira halophila (strain DSM 244 / SL1) (Ectothiorhodospira halophila (strain DSM 244 / SL1)).